The primary structure comprises 406 residues: Multifunctional CCA protein (406 aa).

ATP-binding residues include Gly8 and Arg11. Gly8 and Arg11 together coordinate CTP. Mg(2+)-binding residues include Glu21 and Asp23. Residues Arg91, Arg137, and Arg140 each contribute to the ATP site. CTP-binding residues include Arg91, Arg137, and Arg140. The region spanning 225 to 326 (TGIHTLKVLE…LKLLNRVDAF (102 aa)) is the HD domain.

This sequence belongs to the tRNA nucleotidyltransferase/poly(A) polymerase family. Bacterial CCA-adding enzyme type 1 subfamily. Monomer. Can also form homodimers and oligomers. The cofactor is Mg(2+). Ni(2+) is required as a cofactor.

The enzyme catalyses a tRNA precursor + 2 CTP + ATP = a tRNA with a 3' CCA end + 3 diphosphate. It catalyses the reaction a tRNA with a 3' CCA end + 2 CTP + ATP = a tRNA with a 3' CCACCA end + 3 diphosphate. Functionally, catalyzes the addition and repair of the essential 3'-terminal CCA sequence in tRNAs without using a nucleic acid template. Adds these three nucleotides in the order of C, C, and A to the tRNA nucleotide-73, using CTP and ATP as substrates and producing inorganic pyrophosphate. tRNA 3'-terminal CCA addition is required both for tRNA processing and repair. Also involved in tRNA surveillance by mediating tandem CCA addition to generate a CCACCA at the 3' terminus of unstable tRNAs. While stable tRNAs receive only 3'-terminal CCA, unstable tRNAs are marked with CCACCA and rapidly degraded. This is Multifunctional CCA protein from Nitrosococcus oceani (strain ATCC 19707 / BCRC 17464 / JCM 30415 / NCIMB 11848 / C-107).